Consider the following 523-residue polypeptide: GMP synthase [glutamine-hydrolyzing] (523 aa).

Residues 8–205 form the Glutamine amidotransferase type-1 domain; that stretch reads KILILDFGSQ…VENICGCARS (198 aa). Cys85 functions as the Nucleophile in the catalytic mechanism. Catalysis depends on residues His179 and Glu181. The region spanning 206-398 is the GMPS ATP-PPase domain; the sequence is WTPENIIEDA…LGLPAEMLNR (193 aa). 233–239 provides a ligand contact to ATP; it reads SGGVDSS.

In terms of assembly, homodimer.

It catalyses the reaction XMP + L-glutamine + ATP + H2O = GMP + L-glutamate + AMP + diphosphate + 2 H(+). The protein operates within purine metabolism; GMP biosynthesis; GMP from XMP (L-Gln route): step 1/1. Its function is as follows. Catalyzes the synthesis of GMP from XMP. The protein is GMP synthase [glutamine-hydrolyzing] of Haemophilus ducreyi (strain 35000HP / ATCC 700724).